Consider the following 176-residue polypeptide: MSKVKKNEDTLSEVLVDVNRVTKVVKGGRRFAFSAYVVVGDKAGRVGAGHGKAKEVNEARGKAKQAAKKRMMKVPLYQNRTIHHDVVGKSGAAKVILRRAKAGTGVIAGGSMRAIFDSLGVHDIVAKSIGSTNVYAMISATFDALNKLASPKSIAMRRDKKVNEISIKSSDIQVNE.

The region spanning 11-74 (LSEVLVDVNR…QAAKKRMMKV (64 aa)) is the S5 DRBM domain.

Belongs to the universal ribosomal protein uS5 family. Part of the 30S ribosomal subunit. Contacts proteins S4 and S8.

In terms of biological role, with S4 and S12 plays an important role in translational accuracy. Functionally, located at the back of the 30S subunit body where it stabilizes the conformation of the head with respect to the body. The protein is Small ribosomal subunit protein uS5 of Rickettsia akari (strain Hartford).